The following is a 339-amino-acid chain: Sperm acrosome membrane-associated protein 6 (339 aa).

Positions 1-41 (MTSQRSLSSPQTRRPSVMGLISLVGSIVLLFLLIFRASTWA) are cleaved as a signal peptide. The CXXC motif signature appears at 42–45 (CLFC). Cystine bridges form between Cys-42-Cys-155, Cys-45-Cys-158, Cys-56-Cys-70, Cys-140-Cys-163, Cys-144-Cys-169, and Cys-186-Cys-241. The Extracellular portion of the chain corresponds to 42–310 (CLFCFTTYEE…NPQALTLGNL (269 aa)). The CXXC motif motif lies at 155-158 (CSGC). One can recognise an Ig-like domain in the interval 166–251 (PLDCPVQDML…VILHDQRPLA (86 aa)). Residue Asn-258 is glycosylated (N-linked (GlcNAc...) asparagine). The helical transmembrane segment at 311-331 (FLLAATAALGSASVTLLVWLF) threads the bilayer. The Cytoplasmic segment spans residues 332 to 339 (FRWYLSGN).

The protein belongs to the SPACA6 family. In terms of assembly, forms a complex with IZUMO1 and TMEM81 on spermatocyte cell membrane required for fertilization. As to expression, highly expressed in testis. Minor expression also detected in epididymis, seminal vesicle and ovary. Predominantly expressed in testicular germ cells during spermiogenesis. Most abundant in round spermatids and detected at lower levels in elongating spermatids.

It is found in the cytoplasmic vesicle. The protein localises to the secretory vesicle. The protein resides in the acrosome membrane. Sperm protein required for fusion of sperm with the egg membrane during fertilization. May regulate the expression of sperm surface protein DCST2. The chain is Sperm acrosome membrane-associated protein 6 from Mus musculus (Mouse).